Consider the following 319-residue polypeptide: tRNA uridine(34) hydroxylase (319 aa).

The 95-residue stretch at 127–221 (KQEDTVIIDA…YGKDPEVQGE (95 aa)) folds into the Rhodanese domain. Residue cysteine 181 is the Cysteine persulfide intermediate of the active site.

This sequence belongs to the TrhO family.

It catalyses the reaction uridine(34) in tRNA + AH2 + O2 = 5-hydroxyuridine(34) in tRNA + A + H2O. Functionally, catalyzes oxygen-dependent 5-hydroxyuridine (ho5U) modification at position 34 in tRNAs. The polypeptide is tRNA uridine(34) hydroxylase (Bacillus anthracis (strain A0248)).